A 160-amino-acid chain; its full sequence is Urease accessory protein UreE (160 aa).

The protein belongs to the UreE family.

It localises to the cytoplasm. In terms of biological role, involved in urease metallocenter assembly. Binds nickel. Probably functions as a nickel donor during metallocenter assembly. In Acinetobacter baumannii (strain AB307-0294), this protein is Urease accessory protein UreE.